The chain runs to 152 residues: Venom protein family 1 protein 2 (152 aa).

An N-terminal signal peptide occupies residues 1–21 (MAKLVFISFLVASFCLIGCFG). C70 and C150 form a disulfide bridge.

It belongs to the insect vpf1 family. Expressed by the venom gland (posterior main gland) (at protein level).

Its subcellular location is the secreted. The chain is Venom protein family 1 protein 2 from Platymeris rhadamanthus (Red spot assassin bug).